A 777-amino-acid chain; its full sequence is Ribosome-releasing factor 2, mitochondrial (777 aa).

In terms of domain architecture, tr-type G spans 68–353 (AKIRNIGIMA…AVTMYLPSPE (286 aa)). GTP contacts are provided by residues 77–84 (AHIDAGKT), 141–145 (DTPGH), and 195–198 (NKMD).

It belongs to the TRAFAC class translation factor GTPase superfamily. Classic translation factor GTPase family. EF-G/EF-2 subfamily.

The protein localises to the mitochondrion. It carries out the reaction GTP + H2O = GDP + phosphate + H(+). In terms of biological role, mitochondrial GTPase that mediates the disassembly of ribosomes from messenger RNA at the termination of mitochondrial protein biosynthesis. Acts in collaboration with MRRF. GTP hydrolysis follows the ribosome disassembly and probably occurs on the ribosome large subunit. Not involved in the GTP-dependent ribosomal translocation step during translation elongation. This chain is Ribosome-releasing factor 2, mitochondrial, found in Pongo abelii (Sumatran orangutan).